Consider the following 1189-residue polypeptide: Nucleolar protein NET1 (1189 aa).

A phosphoserine mark is found at Ser60 and Ser166. 2 disordered regions span residues 160–260 (SKLN…ISSG) and 345–1189 (TAQD…FKKK). Over residues 166-180 (SPQSVQPQQQIPSSS) the composition is skewed to low complexity. Residues 200–210 (IRSATNGSMRV) are compositionally biased toward polar residues. 2 positions are modified to phosphoserine: Ser231 and Ser252. Residues 244–253 (LPPPTQPQSP) show a composition bias toward pro residues. The span at 368–381 (PEPRISEIEKELKE) shows a compositional bias: basic and acidic residues. Residues 391 to 407 (PAKAAKIPMKKPYLENG) show a composition bias toward low complexity. The segment covering 432–450 (ASLQRSQSSIADNNGSPVK) has biased composition (polar residues). Phosphoserine occurs at positions 437, 439, 447, and 452. Polar residues predominate over residues 470-486 (ASNTSITKSSNGESWGK). Position 497 is a phosphoserine (Ser497). The segment covering 526-543 (NQVREKEDTNDKLLEKEI) has biased composition (basic and acidic residues). A compositionally biased stretch (acidic residues) spans 590–601 (IEDDGNDNDEVD). The span at 641–657 (SRTSGNSKNSKPYTTVL) shows a compositional bias: polar residues. A compositionally biased stretch (basic and acidic residues) spans 659–668 (KDIDNSKPDP). Thr676 carries the post-translational modification Phosphothreonine. Residues 682–691 (KRAAQLLAGA) show a composition bias toward low complexity. Residues 692–702 (KKNEVPQKSTE) show a composition bias toward basic and acidic residues. Acidic residues predominate over residues 710–725 (TDDESESGIETDFSSD). A compositionally biased stretch (basic and acidic residues) spans 756–777 (KDSKIINKEVDEERNDKRDSQK). Over residues 778 to 792 (KSAVSESSVTNSKIS) the composition is skewed to polar residues. Basic and acidic residues predominate over residues 806-815 (KQNEATKVET). A compositionally biased stretch (low complexity) spans 822 to 833 (SSFPVVGGSPSV). The residue at position 830 (Ser830) is a Phosphoserine. Composition is skewed to basic and acidic residues over residues 884–897 (DLNK…EPEK), 905–919 (ANDK…DSKS), and 945–954 (ANDKLKDLKA). Over residues 969-999 (SNEKNNSSANDDDSSSSGSSTEDESSSSSSS) the composition is skewed to low complexity. The span at 1023 to 1039 (RSSSKIEAPSPSVNKKI) shows a compositional bias: polar residues. Thr1042 carries the phosphothreonine modification. The segment covering 1055-1070 (SSPPSVKSKTTSNPSS) has biased composition (low complexity). A phosphoserine mark is found at Ser1056 and Ser1059. The segment covering 1095 to 1109 (PDVKEKTSKSNEKSQ) has biased composition (basic and acidic residues). Low complexity-rich tracts occupy residues 1123–1137 (DSDS…SDSS) and 1158–1169 (SFISAKSASAAL).

It to yeast YKR010c. Component of the RENT complex which is composed of at least NET1, CDC14 and SIR2. Interacts with NSI1. In terms of processing, phosphorylated by CDC5.

It localises to the nucleus. The protein resides in the nucleolus. In terms of biological role, has a role in chromosome maintenance and is involved in mitotic exit. Inhibits the action of CDC14 by sequestering it in the nucleolus. Also binds to RNA polymerase I and stimulates rRNA synthesis. Influences RDNA chromatin by tethering SIR2 to rDNA in the nucleolus. This is Nucleolar protein NET1 (NET1) from Saccharomyces cerevisiae (strain ATCC 204508 / S288c) (Baker's yeast).